The primary structure comprises 138 residues: ATP synthase epsilon chain (138 aa).

It belongs to the ATPase epsilon chain family. As to quaternary structure, F-type ATPases have 2 components, CF(1) - the catalytic core - and CF(0) - the membrane proton channel. CF(1) has five subunits: alpha(3), beta(3), gamma(1), delta(1), epsilon(1). CF(0) has three main subunits: a, b and c.

It localises to the cell inner membrane. Functionally, produces ATP from ADP in the presence of a proton gradient across the membrane. This is ATP synthase epsilon chain from Geobacter metallireducens (strain ATCC 53774 / DSM 7210 / GS-15).